Here is a 91-residue protein sequence, read N- to C-terminus: Large ribosomal subunit protein uL22 (91 aa).

The protein belongs to the universal ribosomal protein uL22 family. In terms of assembly, part of the 50S ribosomal subunit.

Functionally, this protein binds specifically to 23S rRNA; its binding is stimulated by other ribosomal proteins, e.g. L4, L17, and L20. It is important during the early stages of 50S assembly. It makes multiple contacts with different domains of the 23S rRNA in the assembled 50S subunit and ribosome. The globular domain of the protein is located near the polypeptide exit tunnel on the outside of the subunit, while an extended beta-hairpin is found that lines the wall of the exit tunnel in the center of the 70S ribosome. This chain is Large ribosomal subunit protein uL22 (rplV), found in Ash yellows phytoplasma.